A 199-amino-acid chain; its full sequence is MSSGKAFIGKPAPDFTATAVMPDGQFKDIKLSDYRGKYVVFFFYPLDFTFVCPTEIIAYSDRADEFKKINCEIIGASVDSHFCHLAWINTPKKQGGLGTMKIPLVSDTKRVIAKDYGVLKEDEGIAYRGLFIIDEKGILRQITINDLPVGRSVDETLRLVQAFQFTDKHGEVCPAGWKPGSDTIKPDVQKSKEYFSKQK.

Residues 6–165 (AFIGKPAPDF…TLRLVQAFQF (160 aa)) enclose the Thioredoxin domain. The active-site Cysteine sulfenic acid (-SOH) intermediate is the Cys52.

This sequence belongs to the peroxiredoxin family. AhpC/Prx1 subfamily. As to quaternary structure, homodimer; disulfide-linked, upon oxidation. 5 homodimers assemble to form a ring-like decamer. Interacts with GDPD5; forms a mixed-disulfide with GDPD5. Interacts with SESN1 and SESN2. In terms of processing, the enzyme can be inactivated by further oxidation of the cysteine sulfenic acid (C(P)-SOH) to sulphinic acid (C(P)-SO2H) instead of its condensation to a disulfide bond. It can be reactivated by forming a transient disulfide bond with sulfiredoxin SRXN1, which reduces the cysteine sulfinic acid in an ATP- and Mg-dependent manner.

It localises to the cytoplasm. The enzyme catalyses a hydroperoxide + [thioredoxin]-dithiol = an alcohol + [thioredoxin]-disulfide + H2O. Its function is as follows. Thiol-specific peroxidase that catalyzes the reduction of hydrogen peroxide and organic hydroperoxides to water and alcohols, respectively. Plays a role in cell protection against oxidative stress by detoxifying peroxides and as sensor of hydrogen peroxide-mediated signaling events. Might participate in the signaling cascades of growth factors and tumor necrosis factor-alpha by regulating the intracellular concentrations of H(2)O(2). Reduces an intramolecular disulfide bond in GDPD5 that gates the ability to GDPD5 to drive postmitotic motor neuron differentiation. The polypeptide is Peroxiredoxin-1 (PRDX1) (Gallus gallus (Chicken)).